Reading from the N-terminus, the 343-residue chain is Protein RecA (343 aa).

66 to 73 lines the ATP pocket; sequence GPESSGKT.

The protein belongs to the RecA family.

The protein localises to the cytoplasm. In terms of biological role, can catalyze the hydrolysis of ATP in the presence of single-stranded DNA, the ATP-dependent uptake of single-stranded DNA by duplex DNA, and the ATP-dependent hybridization of homologous single-stranded DNAs. It interacts with LexA causing its activation and leading to its autocatalytic cleavage. The protein is Protein RecA of Rickettsia canadensis (strain McKiel).